A 162-amino-acid polypeptide reads, in one-letter code: Probable chemoreceptor glutamine deamidase CheD (162 aa).

The protein belongs to the CheD family.

It carries out the reaction L-glutaminyl-[protein] + H2O = L-glutamyl-[protein] + NH4(+). In terms of biological role, probably deamidates glutamine residues to glutamate on methyl-accepting chemotaxis receptors (MCPs), playing an important role in chemotaxis. This chain is Probable chemoreceptor glutamine deamidase CheD, found in Caldanaerobacter subterraneus subsp. tengcongensis (strain DSM 15242 / JCM 11007 / NBRC 100824 / MB4) (Thermoanaerobacter tengcongensis).